We begin with the raw amino-acid sequence, 785 residues long: SUN domain-containing protein 1 (785 aa).

The segment at 1–138 (MDFSRLHMYS…TRRPPVLDES (138 aa)) is LMNA-binding. Over 1-288 (MDFSRLHMYS…VFLLTRCLRN (288 aa)) the chain is Nuclear. Phosphoserine is present on residues serine 48, serine 100, and serine 138. Lysine 195 is covalently cross-linked (Glycyl lysine isopeptide (Lys-Gly) (interchain with G-Cter in SUMO2)). An SYNE2-binding region spans residues 209 to 309 (SRVYSRDRNQ…FLLLAGLSLR (101 aa)). Residues 223–309 (LLQILRRIGA…FLLLAGLSLR (87 aa)) are EMD-binding. A helical membrane pass occupies residues 289-308 (ICKFLVLLIPLFLLLAGLSL). At 309–785 (RGQGNFFSFL…RFRVHGEPVK (477 aa)) the chain is on the perinuclear space side. A phosphoserine mark is found at aspartate 333 and serine 344. The stretch at 428–495 (HQEHEVRMSH…KSELSSWRHV (68 aa)) forms a coiled coil. The sufficient for interaction with SYNE1 and SYNE2 stretch occupies residues 574 to 785 (TSEAVVSAVS…RFRVHGEPVK (212 aa)). The SUN domain maps to 622–784 (GGSILSTRCS…YRFRVHGEPV (163 aa)).

As to quaternary structure, core component of the LINC complex which is composed of inner nuclear membrane SUN domain-containing proteins coupled to outer nuclear membrane KASH domain-containing nesprins. SUN and KASH domain-containing proteins seem to bind each other promiscuously; however, differentially expression of LINC complex constituents is giving rise to specific assemblies. At least SUN1/2-containing core LINC complexes are proposed to be hexameric composed of three protomers of each KASH and SUN domain-containing protein. Interacts with KASH5 (via the last 22 amino acids); this interaction mediates KASH5 telomere localization by forming a SUN1:KASH5 LINC complex. May interact with SYNE3. Interacts with SYNE2 and SYNE1; probably forming respective LINC complexes. Interacts with A-type lamin with a strong preference for unprocessed A-type lamin compared with the mature protein. Interaction with lamins B1 and C is hardly detectable. Interacts with NAT10. Interacts with EMD and TSNAX. Associates with the nuclear pore complex (NPC). Interacts with CCDC79/TERB1; promoting the accumulation of the LINC complex complexes at the telomere-nuclear envelope attachment sites. Interacts (via KASH domain) with TMEM258. Post-translationally, the disulfide bond with KASH domain-containing nesprins is required for stability of the respective LINC complexes under tensile forces.

Its subcellular location is the nucleus inner membrane. Its function is as follows. As a component of the LINC (LInker of Nucleoskeleton and Cytoskeleton) complex involved in the connection between the nuclear lamina and the cytoskeleton. The nucleocytoplasmic interactions established by the LINC complex play an important role in the transmission of mechanical forces across the nuclear envelope and in nuclear movement and positioning. Required for interkinetic nuclear migration (INM) and essential for nucleokinesis and centrosome-nucleus coupling during radial neuronal migration in the cerebral cortex and during glial migration. Involved in telomere attachment to nuclear envelope in the prophase of meiosis implicating a SUN1/2:KASH5 LINC complex in which SUN1 and SUN2 seem to act at least partial redundantly. Required for gametogenesis and involved in selective gene expression of coding and non-coding RNAs needed for gametogenesis. Helps to define the distribution of nuclear pore complexes (NPCs). Required for efficient localization of SYNE4 in the nuclear envelope. May be involved in nuclear remodeling during sperm head formation in spermatogenesis. May play a role in DNA repair by suppressing non-homologous end joining repair to facilitate the repair of DNA cross-links. The sequence is that of SUN domain-containing protein 1 from Homo sapiens (Human).